Consider the following 613-residue polypeptide: Leucine aminopeptidase 2 (613 aa).

Residues 134–136 (QAQ) and 265–270 (PYGGME) each bind a peptide. Residue H294 coordinates Zn(2+). The active-site Proton acceptor is the E295. Residues H298 and E317 each contribute to the Zn(2+) site. Catalysis depends on Y382, which acts as the Proton donor.

The protein belongs to the peptidase M1 family. Requires Zn(2+) as cofactor.

Its subcellular location is the cytoplasm. It is found in the nucleus. It catalyses the reaction an epoxide + H2O = an ethanediol. Functionally, aminopeptidase that preferentially cleaves di- and tripeptides. Also has low epoxide hydrolase activity (in vitro). Can hydrolyze the epoxide leukotriene LTA(4) but it forms preferentially 5,6-dihydroxy-7,9,11,14-eicosatetraenoic acid rather than the cytokine leukotriene B(4) as the product compared to the homologous mammalian enzyme (in vitro). The protein is Leucine aminopeptidase 2 of Pyricularia oryzae (strain 70-15 / ATCC MYA-4617 / FGSC 8958) (Rice blast fungus).